Reading from the N-terminus, the 392-residue chain is General receptor for phosphoinositides 1-associated scaffold protein (392 aa).

Positions 1–50 (MTLRRLRKLQQKEEATAAPDPAGRAPDSEAARAAPLPSGPPAAAAPPGAP) are disordered. Residues 37–49 (PSGPPAAAAPPGA) show a composition bias toward pro residues. T76 carries the post-translational modification Phosphothreonine. Phosphoserine is present on S93. Residues 100–189 (VLTLEKGDNQ…VLRLETLYGT (90 aa)) form the PDZ domain. The interaction with PSCD3 stretch occupies residues 180–257 (VLRLETLYGT…GAGLLPGSLP (78 aa)). Y236 carries the post-translational modification Phosphotyrosine. At R269 the chain carries Omega-N-methylarginine. The interval 294–315 (PQALPPPPPPARALGPSSAETP) is disordered. S384 is subject to Phosphoserine.

As to quaternary structure, heteromer. Composed of TAMALIN, CYTH2 and at least one GRM1. Also interacts with GRM2, GRM3 and GRM5. Interacts with CYTH3. In terms of tissue distribution, highly expressed in brain, heart and lung, and to a lower extent in embryo, kidney and ovary.

The protein resides in the cytoplasm. Its subcellular location is the perinuclear region. It localises to the cell membrane. It is found in the postsynaptic cell membrane. Functionally, plays a role in intracellular trafficking and contributes to the macromolecular organization of group 1 metabotropic glutamate receptors (mGluRs) at synapses. This is General receptor for phosphoinositides 1-associated scaffold protein from Mus musculus (Mouse).